The chain runs to 423 residues: Deferrochelatase (423 aa).

The tat-type signal signal peptide spans methionine 1–alanine 35. Heme b is bound by residues glycine 236–alanine 238, histidine 329, asparagine 334–arginine 336, and arginine 347.

This sequence belongs to the DyP-type peroxidase family. EfeB subfamily. In terms of assembly, homodimer. Part of a ferrous iron transporter composed of EfeU, EfeO and EfeB. It depends on heme b as a cofactor. Predicted to be exported by the Tat system. The position of the signal peptide cleavage has not been experimentally proven.

It localises to the periplasm. It catalyses the reaction heme b + 2 H(+) = protoporphyrin IX + Fe(2+). Functionally, involved in the recovery of exogenous heme iron. Extracts iron from heme while preserving the protoporphyrin ring intact. The protein is Deferrochelatase (efeB) of Shigella boydii serotype 4 (strain Sb227).